Consider the following 173-residue polypeptide: Translation initiation factor IF-3 (173 aa).

Belongs to the IF-3 family. In terms of assembly, monomer.

It is found in the cytoplasm. Its function is as follows. IF-3 binds to the 30S ribosomal subunit and shifts the equilibrium between 70S ribosomes and their 50S and 30S subunits in favor of the free subunits, thus enhancing the availability of 30S subunits on which protein synthesis initiation begins. The protein is Translation initiation factor IF-3 of Phenylobacterium zucineum (strain HLK1).